A 297-amino-acid polypeptide reads, in one-letter code: Acetylglutamate kinase (297 aa).

Substrate-binding positions include 72-73 (GG), Arg-94, and Asn-187.

It belongs to the acetylglutamate kinase family. ArgB subfamily.

The protein resides in the cytoplasm. It carries out the reaction N-acetyl-L-glutamate + ATP = N-acetyl-L-glutamyl 5-phosphate + ADP. The protein operates within amino-acid biosynthesis; L-arginine biosynthesis; N(2)-acetyl-L-ornithine from L-glutamate: step 2/4. Catalyzes the ATP-dependent phosphorylation of N-acetyl-L-glutamate. In Synechocystis sp. (strain ATCC 27184 / PCC 6803 / Kazusa), this protein is Acetylglutamate kinase.